Reading from the N-terminus, the 348-residue chain is Guanosine ABC transporter permease protein NupP (348 aa).

The next 9 helical transmembrane spans lie at 8–28 (LLVP…IMLV), 61–81 (YILS…NIGV), 85–105 (LLVG…PAYI), 107–127 (LPLA…IPGI), 136–156 (EVIV…YIIS), 189–209 (LHLG…IINK), 237–257 (IMTS…MEGL), 277–297 (IAVA…ACLL), and 320–340 (IVIA…FVMG).

The protein belongs to the binding-protein-dependent transport system permease family. The complex is composed of two ATP-binding proteins (NupO), two transmembrane proteins (NupP and NupQ) and a solute-binding protein (NupN).

The protein localises to the cell membrane. In terms of biological role, part of an ABC transporter complex involved in the uptake of guanosine. Responsible for the translocation of the substrate across the membrane. May be a nucleoside transporter of broad specificity but with various affinities for different substrates. The chain is Guanosine ABC transporter permease protein NupP from Bacillus subtilis (strain 168).